The primary structure comprises 156 residues: MPRRRVIGQRKILPDPKFKSELLAKFVNILMVDGKKSVAEKIVYTALDTMAEKSGKDHLAVFEEALENVRPAVEVKSRRVGGSTYQVPVEVRPVRRNALAMRWLVEAARKRGEKSMAARLAAEMLDASDNKGTAVKKREDVHRMAEANKAFAHYRW.

The protein belongs to the universal ribosomal protein uS7 family. Part of the 30S ribosomal subunit. Contacts proteins S9 and S11.

Its function is as follows. One of the primary rRNA binding proteins, it binds directly to 16S rRNA where it nucleates assembly of the head domain of the 30S subunit. Is located at the subunit interface close to the decoding center, probably blocks exit of the E-site tRNA. This chain is Small ribosomal subunit protein uS7, found in Vibrio vulnificus (strain CMCP6).